Here is a 507-residue protein sequence, read N- to C-terminus: MFS transporter fsa7 (507 aa).

Residues 1–65 form a disordered region; that stretch reads MATKDPAVTT…PDDPEHPLNW (65 aa). Asn64 is a glycosylation site (N-linked (GlcNAc...) asparagine). A helical membrane pass occupies residues 72–92; the sequence is LHLVIVSLFTLAANLAATMFA. An N-linked (GlcNAc...) asparagine glycan is attached at Asn106. The next 5 helical transmembrane spans lie at 111 to 131, 146 to 166, 169 to 189, 200 to 220, and 228 to 248; these read AMTVSLYVLGFALGPLLLAPL, FVYIAFTIGCAFSTNVAMFLV, IICGCAASGPMSIGGGTVADL, ALFTVGPLLGPVIGPIIGGFV, and WTFRIILIFSGLIGVATVIFM. Asn252 is a glycosylation site (N-linked (GlcNAc...) asparagine). The next 6 membrane-spanning stretches (helical) occupy residues 302-322, 341-361, 379-399, 406-426, 429-449, and 472-492; these read PIVLLVSLYTGILFGLIFLLF, GLAYLGLGIGMILGLVLFSVL, LILMKWLGPVTPLGLFIYGWT, WIVPIIGTFVVGFGSLFVVIP, IYLVDSFGAEAAASAMAANLL, and GWGNSVLGFICLLFTPVPWFF.

Belongs to the major facilitator superfamily.

Its subcellular location is the cell membrane. Its function is as follows. Efflux pump that might be required for efficient secretion of fusarisetin A or other secondary metabolies produced by the fusarisetin A gene cluster. This chain is MFS transporter fsa7, found in Fusarium sp. (strain FN080326).